A 359-amino-acid polypeptide reads, in one-letter code: MPAHLLQEEISSSYTTTTTITAPPSKVLQNGGGKLEKTPLYLEEDIRPEMRDDIYDPTYQDKEGPKPKLEYVWRNIILMGLLHLGALYGITLIPTCKIYTFLWVLFYYMMSALGITAGVHRLWSHRTYKARLPLRVFLIIANTMAFQNDVFEWSRDHRAHHKFSETDADPHNSRRGFFFSHVGWLLVRKHPAVREKGATLDLSDLRAEKLVMFQRRYYKPGVLLLCFILPTLVPWYLWGETFQNSLFFATLLRYAVVLNATWLVNSAAHMYGYRPYDKTINPRENILVSLGAVGEGFHNYHHTFPYDYSASEYRWHINFTTFFIDCMAAIGLAYDRKKVSKAAALARMKRTGEESCKSG.

Over 1 to 72 (MPAHLLQEEI…EGPKPKLEYV (72 aa)) the chain is Cytoplasmic. Residues 73 to 93 (WRNIILMGLLHLGALYGITLI) form a helical membrane-spanning segment. Substrate is bound at residue Asn-75. The Lumenal segment spans residues 94-97 (PTCK). Residues 98-118 (IYTFLWVLFYYMMSALGITAG) form a helical membrane-spanning segment. The Cytoplasmic segment spans residues 119–217 (VHRLWSHRTY…EKLVMFQRRY (99 aa)). 2 residues coordinate Fe cation: His-120 and His-125. Positions 120–125 (HRLWSH) match the Histidine box-1 motif. Residues Asn-148, Arg-155, and Asp-156 each contribute to the substrate site. Fe cation-binding residues include His-157, His-160, and His-161. The Histidine box-2 motif lies at 157 to 161 (HRAHH). Positions 188 and 189 each coordinate substrate. A Phosphoserine modification is found at Ser-203. A helical membrane pass occupies residues 218 to 237 (YKPGVLLLCFILPTLVPWYL). At 238 to 241 (WGET) the chain is on the lumenal side. Residues 242-263 (FQNSLFFATLLRYAVVLNATWL) form a helical membrane-spanning segment. A substrate-binding site is contributed by Trp-262. The Cytoplasmic portion of the chain corresponds to 264-359 (VNSAAHMYGY…RTGEESCKSG (96 aa)). The Fe cation site is built by His-269, His-298, His-301, and His-302. Residues 298–302 (HNYHH) carry the Histidine box-3 motif.

This sequence belongs to the fatty acid desaturase type 1 family. It depends on Fe(2+) as a cofactor.

The protein resides in the endoplasmic reticulum membrane. It catalyses the reaction octadecanoyl-CoA + 2 Fe(II)-[cytochrome b5] + O2 + 2 H(+) = (9Z)-octadecenoyl-CoA + 2 Fe(III)-[cytochrome b5] + 2 H2O. It carries out the reaction hexadecanoyl-CoA + 2 Fe(II)-[cytochrome b5] + O2 + 2 H(+) = (9Z)-hexadecenoyl-CoA + 2 Fe(III)-[cytochrome b5] + 2 H2O. Stearoyl-CoA desaturase that utilizes O(2) and electrons from reduced cytochrome b5 to introduce the first double bond into saturated fatty acyl-CoA substrates. Catalyzes the insertion of a cis double bond at the delta-9 position into fatty acyl-CoA substrates including palmitoyl-CoA and stearoyl-CoA. Gives rise to a mixture of 16:1 and 18:1 unsaturated fatty acids. Plays an important role in lipid biosynthesis. Plays an important role in regulating the expression of genes that are involved in lipogenesis and in regulating mitochondrial fatty acid oxidation. Plays an important role in body energy homeostasis. Contributes to the biosynthesis of membrane phospholipids, cholesterol esters and triglycerides. This chain is Stearoyl-CoA desaturase (SCD), found in Capra hircus (Goat).